The following is a 327-amino-acid chain: tRNA uridine(34) hydroxylase (327 aa).

Positions Ser123–Ser217 constitute a Rhodanese domain. Residue Cys177 is the Cysteine persulfide intermediate of the active site.

The protein belongs to the TrhO family.

It catalyses the reaction uridine(34) in tRNA + AH2 + O2 = 5-hydroxyuridine(34) in tRNA + A + H2O. Functionally, catalyzes oxygen-dependent 5-hydroxyuridine (ho5U) modification at position 34 in tRNAs. The sequence is that of tRNA uridine(34) hydroxylase from Shewanella piezotolerans (strain WP3 / JCM 13877).